A 130-amino-acid chain; its full sequence is Small ribosomal subunit protein uS8 (130 aa).

It belongs to the universal ribosomal protein uS8 family. Part of the 30S ribosomal subunit.

Its function is as follows. One of the primary rRNA binding proteins, it binds directly to 16S rRNA central domain where it helps coordinate assembly of the platform of the 30S subunit. The polypeptide is Small ribosomal subunit protein uS8 (Methanosarcina barkeri (strain Fusaro / DSM 804)).